We begin with the raw amino-acid sequence, 358 residues long: Photosystem II protein D1 (358 aa).

Transmembrane regions (helical) follow at residues Tyr-29–Ile-46, His-116–Leu-131, and Trp-140–Ser-154. Residue His-116 coordinates chlorophyll a. Trp-124 is a pheophytin a binding site. Residues Asp-168 and Glu-187 each coordinate [CaMn4O5] cluster. A helical transmembrane segment spans residues Phe-195–Leu-216. His-196 is a binding site for chlorophyll a. A quinone is bound by residues His-213 and Ser-262 to Phe-263. Position 213 (His-213) interacts with Fe cation. His-270 is a binding site for Fe cation. Residues Phe-272 to Leu-286 form a helical membrane-spanning segment. [CaMn4O5] cluster contacts are provided by His-330, Glu-331, Asp-340, and Ala-342. Positions Ala-343–Gly-358 are excised as a propeptide.

This sequence belongs to the reaction center PufL/M/PsbA/D family. As to quaternary structure, PSII is composed of 1 copy each of membrane proteins PsbA, PsbB, PsbC, PsbD, PsbE, PsbF, PsbH, PsbI, PsbJ, PsbK, PsbL, PsbM, PsbT, PsbX, PsbY, PsbZ, Psb30/Ycf12, peripheral proteins PsbO, CyanoQ (PsbQ), PsbU, PsbV and a large number of cofactors. It forms dimeric complexes. The cofactor is The D1/D2 heterodimer binds P680, chlorophylls that are the primary electron donor of PSII, and subsequent electron acceptors. It shares a non-heme iron and each subunit binds pheophytin, quinone, additional chlorophylls, carotenoids and lipids. D1 provides most of the ligands for the Mn4-Ca-O5 cluster of the oxygen-evolving complex (OEC). There is also a Cl(-1) ion associated with D1 and D2, which is required for oxygen evolution. The PSII complex binds additional chlorophylls, carotenoids and specific lipids.. Post-translationally, tyr-159 forms a radical intermediate that is referred to as redox-active TyrZ, YZ or Y-Z. C-terminally processed by CtpA; processing is essential to allow assembly of the oxygen-evolving complex and thus photosynthetic growth.

The protein localises to the cellular thylakoid membrane. The enzyme catalyses 2 a plastoquinone + 4 hnu + 2 H2O = 2 a plastoquinol + O2. Photosystem II (PSII) is a light-driven water:plastoquinone oxidoreductase that uses light energy to abstract electrons from H(2)O, generating O(2) and a proton gradient subsequently used for ATP formation. It consists of a core antenna complex that captures photons, and an electron transfer chain that converts photonic excitation into a charge separation. The D1/D2 (PsbA/PsbD) reaction center heterodimer binds P680, the primary electron donor of PSII as well as several subsequent electron acceptors. The sequence is that of Photosystem II protein D1 from Mastigocladus laminosus (Fischerella sp.).